We begin with the raw amino-acid sequence, 287 residues long: MARKYVPHTTELCENSLKKFKSLVGTVDKLLIITGAGISTESGIPDYRSKDVGLYTKTALEPIYFQDFMKSKKCRQRYWSRSYLNWPRFAQALPNFNHYALSKWEAANKFHWLITQNVDGLHLKAGSKMITELHGNALQVKCTSCEYIETRQTYQDRLNYANPGFKEQFVSPGQQELDADTALPLGSEQGFKIPECLNCGGLMKTDVTLFGENLNTDKIKVCGKKVNECNGVLTLGTSLEVLSGYQIVNHAHMQNKPIFIVNIGPTRADQMATMKLDYRISDVLKEM.

The Deacetylase sirtuin-type domain occupies 10–287 (TELCENSLKK…YRISDVLKEM (278 aa)). Residues 35–55 (GAGISTESGIPDYRSKDVGLY) and 116–119 (QNVD) each bind NAD(+). Catalysis depends on histidine 134, which acts as the Proton acceptor. Residues cysteine 142, cysteine 145, cysteine 196, and cysteine 199 each contribute to the Zn(2+) site. NAD(+) is bound by residues 236-238 (GTS), 262-264 (NIG), and isoleucine 280.

The protein belongs to the sirtuin family. Class II subfamily. As to quaternary structure, interacts with pyc-1, pcca-1 and mccc-1. It depends on Zn(2+) as a cofactor. As to expression, ubiquitously expressed with high expression in the pharynx, body wall muscles and gonad. Strong expression in a subset of non-neuronal cells in the head.

Its subcellular location is the mitochondrion matrix. It is found in the mitochondrion. The enzyme catalyses N(6)-acetyl-L-lysyl-[protein] + NAD(+) + H2O = 2''-O-acetyl-ADP-D-ribose + nicotinamide + L-lysyl-[protein]. In terms of biological role, NAD-dependent protein deacylase. Catalyzes the NAD-dependent hydrolysis of acyl groups from lysine residues. Plays a role in oxidative stress resistance. Might promote neuronal cell death under ischemic conditions and cell death in touch neurons induced by mec-4 channel hyperactivation, possibly downstream of the insulin-like receptor daf-2. Might attenuate the reactive oxygen species (ROS) scavenging system, that eliminates ROS in ischemic conditions, under dietary deprivation and when glycolysis is blocked. The polypeptide is NAD-dependent protein deacylase sir-2.3 (sir-2.3) (Caenorhabditis elegans).